The sequence spans 290 residues: Pyridoxal kinase PdxY (290 aa).

Substrate is bound by residues Ser-12 and Thr-47–Gln-48. ATP is bound by residues Asp-114, Glu-151, Lys-184, and Arg-211 to Leu-214. Residue Asp-225 coordinates substrate.

It belongs to the pyridoxine kinase family. PdxY subfamily. In terms of assembly, homodimer. Mg(2+) serves as cofactor.

It carries out the reaction pyridoxal + ATP = pyridoxal 5'-phosphate + ADP + H(+). It participates in cofactor metabolism; pyridoxal 5'-phosphate salvage; pyridoxal 5'-phosphate from pyridoxal: step 1/1. Its function is as follows. Pyridoxal kinase involved in the salvage pathway of pyridoxal 5'-phosphate (PLP). Catalyzes the phosphorylation of pyridoxal to PLP. The polypeptide is Pyridoxal kinase PdxY (Pseudomonas fluorescens (strain SBW25)).